The chain runs to 252 residues: F-box/SPRY domain-containing protein 1 (252 aa).

Positions 1–48 (MVDPLCNYNVLESIFSYLELNDLNRCSQVCKSWYHFLNDENSDVWRWH) constitute an F-box domain. The B30.2/SPRY domain maps to 58-250 (VKSDLLSSVT…VSMVYLGTPL (193 aa)).

Belongs to the FBXO45/Fsn family. Component of an E3 ubiquitin ligase complex composed of hiw and Fsn.

It is found in the synapse. It functions in the pathway protein modification; protein ubiquitination. Functionally, required in the presynaptic motoneuron to down-regulate the levels of wnd and restrain synaptic terminal growth at the neuromuscular junction (NMJ). The polypeptide is F-box/SPRY domain-containing protein 1 (Drosophila grimshawi (Hawaiian fruit fly)).